The sequence spans 291 residues: Segregation and condensation protein A (291 aa).

The protein belongs to the ScpA family. Component of a cohesin-like complex composed of ScpA, ScpB and the Smc homodimer, in which ScpA and ScpB bind to the head domain of Smc. The presence of the three proteins is required for the association of the complex with DNA.

It localises to the cytoplasm. Functionally, participates in chromosomal partition during cell division. May act via the formation of a condensin-like complex containing Smc and ScpB that pull DNA away from mid-cell into both cell halves. This is Segregation and condensation protein A from Malacoplasma penetrans (strain HF-2) (Mycoplasma penetrans).